We begin with the raw amino-acid sequence, 256 residues long: H-2 class II histocompatibility antigen, A-D alpha chain (256 aa).

The first 23 residues, 1–23 (MPCSRALILGVLALNTMLSLCGG), serve as a signal peptide directing secretion. Residues 24–111 (EDDIEADHVG…KRSNFTPATN (88 aa)) form an alpha-1 region. The Extracellular portion of the chain corresponds to 24 to 218 (EDDIEADHVG…IPAPMSELTE (195 aa)). The segment at 112–205 (EAPQATVFPK…GLEEPVLKHW (94 aa)) is alpha-2. The Ig-like C1-type domain maps to 114 to 206 (PQATVFPKSP…LEEPVLKHWE (93 aa)). The cysteines at positions 134 and 190 are disulfide-linked. The N-linked (GlcNAc...) asparagine glycan is linked to Asn145. The interval 206–218 (EPEIPAPMSELTE) is connecting peptide. The chain crosses the membrane as a helical span at residues 219–244 (TVVCALGLSVGLVGIVVGTIFIIQGL). The Cytoplasmic segment spans residues 245-256 (RSGGTSRHPGPL).

This sequence belongs to the MHC class II family.

Its subcellular location is the membrane. The polypeptide is H-2 class II histocompatibility antigen, A-D alpha chain (H2-Aa) (Mus musculus (Mouse)).